The following is a 127-amino-acid chain: Glycine cleavage system H protein (127 aa).

One can recognise a Lipoyl-binding domain in the interval 22 to 104 (KARIGITHFA…YEKAWMIVVE (83 aa)). An N6-lipoyllysine modification is found at lysine 63.

Belongs to the GcvH family. In terms of assembly, the glycine cleavage system is composed of four proteins: P, T, L and H. It depends on (R)-lipoate as a cofactor.

Functionally, the glycine cleavage system catalyzes the degradation of glycine. The H protein shuttles the methylamine group of glycine from the P protein to the T protein. Is also involved in protein lipoylation via its role as an octanoyl/lipoyl carrier protein intermediate. In Bacillus velezensis (strain DSM 23117 / BGSC 10A6 / LMG 26770 / FZB42) (Bacillus amyloliquefaciens subsp. plantarum), this protein is Glycine cleavage system H protein.